The chain runs to 260 residues: Snake venom serine protease homolog (260 aa).

Positions 1–18 are cleaved as a signal peptide; it reads MVLVRVLANLLMLQLSYA. The propeptide occupies 19–24; the sequence is QKSSEL. One can recognise a Peptidase S1 domain in the interval 25 to 251; it reads IIGGDECNIN…HLDWIKSIIA (227 aa). Disulfide bonds link C31–C165, C52–C68, C100–C258, C144–C212, C176–C191, and C202–C227. The active-site Charge relay system is D112. 2 N-linked (GlcNAc...) asparagine glycosylation sites follow: N123 and N124. S206 acts as the Charge relay system in catalysis.

The protein belongs to the peptidase S1 family. Snake venom subfamily. In terms of tissue distribution, expressed by the venom gland.

It is found in the secreted. Functionally, snake venom serine protease homolog. May act in the hemostasis system of the prey. The polypeptide is Snake venom serine protease homolog (Protobothrops jerdonii (Jerdon's pitviper)).